A 118-amino-acid polypeptide reads, in one-letter code: AESKPAESEHELAEVEEENELADLEDAVWLEHLADLSDLEEARGFFGNTWKKIKGKADKIMLKKAVKLMVKKEGISKEEAQAKVDAMSKKQIRLYLLKYYGKKSSSKSVRKIVISKSF.

Positions 1–3 (AES) are cleaved as a signal peptide. Residues 4-43 (KPAESEHELAEVEEENELADLEDAVWLEHLADLSDLEEAR) constitute a propeptide that is removed on maturation.

It belongs to the cationic peptide 06 (cytoinsectotoxin) family. Expressed by the venom gland.

The protein resides in the secreted. Its function is as follows. Insecticidal, cytolytic and antimicrobial peptide. Forms voltage-dependent, ion-permeable channels in membranes. At high concentration causes cell membrane lysis. In Lachesana tarabaevi (Spider), this protein is M-zodatoxin-Lt8p (cit 1-15).